The chain runs to 522 residues: Transactivator/viroplasmin protein (522 aa).

A compositionally biased stretch (basic and acidic residues) spans 487–500 (KDASTDRGTTDKDG). Positions 487-522 (KDASTDRGTTDKDGPPPTRSIVEKEDVPTTSSKQVD) are disordered.

It belongs to the caulimoviridae viroplasmin family.

It is found in the host cytoplasm. Enhances the ribosomal termination-reinitiation event leading to the translation of major open reading frames on the polycistronic viral RNAs. In Arabidopsis thaliana (Mouse-ear cress), this protein is Transactivator/viroplasmin protein.